The following is a 347-amino-acid chain: Phosphoribosylformylglycinamidine cyclo-ligase (347 aa).

It belongs to the AIR synthase family.

Its subcellular location is the cytoplasm. It catalyses the reaction 2-formamido-N(1)-(5-O-phospho-beta-D-ribosyl)acetamidine + ATP = 5-amino-1-(5-phospho-beta-D-ribosyl)imidazole + ADP + phosphate + H(+). The protein operates within purine metabolism; IMP biosynthesis via de novo pathway; 5-amino-1-(5-phospho-D-ribosyl)imidazole from N(2)-formyl-N(1)-(5-phospho-D-ribosyl)glycinamide: step 2/2. This chain is Phosphoribosylformylglycinamidine cyclo-ligase, found in Prochlorococcus marinus (strain MIT 9301).